The primary structure comprises 91 residues: MSRSIKKGPFVDAHLIKKVDTAVAGKDKKPIKTWSRRSTILPEFIGLTIAVHNGRQHVPVYINENMVGHKLGEFALTRTFKGHAADKKAKR.

Belongs to the universal ribosomal protein uS19 family.

In terms of biological role, protein S19 forms a complex with S13 that binds strongly to the 16S ribosomal RNA. In Bordetella petrii (strain ATCC BAA-461 / DSM 12804 / CCUG 43448), this protein is Small ribosomal subunit protein uS19.